The sequence spans 465 residues: Phosphomannomutase/phosphoglucomutase (465 aa).

Catalysis depends on Ser110, which acts as the Phosphoserine intermediate. Residues Ser110, Asp244, Asp246, and Asp248 each contribute to the Mg(2+) site. Substrate-binding residues include Glu327, Ser329, and His331.

It belongs to the phosphohexose mutase family. In terms of assembly, monomer. Mg(2+) is required as a cofactor.

The enzyme catalyses alpha-D-mannose 1-phosphate = D-mannose 6-phosphate. It catalyses the reaction alpha-D-glucose 1-phosphate = alpha-D-glucose 6-phosphate. It participates in nucleotide-sugar biosynthesis; GDP-alpha-D-mannose biosynthesis; alpha-D-mannose 1-phosphate from D-fructose 6-phosphate: step 2/2. It functions in the pathway bacterial outer membrane biogenesis; lipopolysaccharide biosynthesis. Its function is as follows. The phosphomannomutase activity produces a precursor for alginate polymerization. The alginate layer causes a mucoid phenotype and provides a protective barrier against host immune defenses and antibiotics. Also involved in core-LPS biosynthesis due to its phosphoglucomutase activity. Essential for biofilm production. This Pseudomonas syringae pv. tomato (strain ATCC BAA-871 / DC3000) protein is Phosphomannomutase/phosphoglucomutase (algC).